Reading from the N-terminus, the 76-residue chain is uncharacterized protein (76 aa).

The protein localises to the host cytoplasm. This is an uncharacterized protein from Escherichia phage Mu (Bacteriophage Mu).